We begin with the raw amino-acid sequence, 162 residues long: Peptide deformylase-like (162 aa).

This sequence belongs to the polypeptide deformylase family.

The chain is Peptide deformylase-like from Staphylococcus aureus (strain COL).